The chain runs to 606 residues: Membrane protein insertase YidC (606 aa).

The helical transmembrane segment at 8–28 (LILATALSFIVILVWFVLFPP) threads the bilayer. The disordered stretch occupies residues 33-59 (MPLTGETSTELTPDAATGSLPSVTSDT). A run of 6 helical transmembrane segments spans residues 116-136 (IVTMLSPVGSPGAYYALYGWA), 348-368 (FIDSIDWGWFFFLTKPIFFLL), 374-394 (FIGNMGWAIIGLTLIIKAILL), 448-468 (LPILLQIPIFFSLYKVIFVTI), 506-526 (SIMALIFIGILPLLLGISMWL), and 542-562 (IFAWMPWVFMFMLGGFASGLV).

Belongs to the OXA1/ALB3/YidC family. Type 1 subfamily. In terms of assembly, interacts with the Sec translocase complex via SecD. Specifically interacts with transmembrane segments of nascent integral membrane proteins during membrane integration.

The protein resides in the cell inner membrane. Functionally, required for the insertion and/or proper folding and/or complex formation of integral membrane proteins into the membrane. Involved in integration of membrane proteins that insert both dependently and independently of the Sec translocase complex, as well as at least some lipoproteins. Aids folding of multispanning membrane proteins. This chain is Membrane protein insertase YidC, found in Roseobacter denitrificans (strain ATCC 33942 / OCh 114) (Erythrobacter sp. (strain OCh 114)).